The primary structure comprises 1107 residues: Rho GTPase-activating protein 39 (1107 aa).

The disordered stretch occupies residues 1–21 (MSQAQDYECRSHHVDEQEPRI). Residue S2 is modified to N-acetylserine. A compositionally biased stretch (basic and acidic residues) spans 7–19 (YECRSHHVDEQEP). WW domains lie at 25–58 (STRLEWVEIIEPRTRERMYANLVTGECVWDPPAG) and 63–97 (RTSEDQWWELFDPNTSRFYYYSAASQRTVWHRPQN). The segment covering 111–122 (QNTESPRASADN) has biased composition (polar residues). 4 disordered regions span residues 111–173 (QNTE…PPGV), 218–267 (PSFL…PERR), 282–311 (SPLLIQPRKPSSDSQPSSPRYGYEPPLYEE), and 326–370 (MDVQ…LMRT). A compositionally biased stretch (low complexity) spans 123–136 (SPGRGSRDGSTGSS). Residues 242-254 (SGSQHSPNLQTFV) show a composition bias toward polar residues. A Phosphoserine modification is found at S282. Composition is skewed to polar residues over residues 331–343 (EANSPYQTGSPQR) and 353–369 (LQTTKQTPTSPCQQLMR). 4 positions are modified to phosphoserine: S380, S384, S402, and S403. 3 disordered regions span residues 404–429 (PKLRAGPRHKYAPNPGGGTYSLQPSP), 441–529 (SGDY…RASL), and 563–585 (MKQRGSWDSQQDGSGYESDGAVP). Residues 470 to 484 (SWSSQQDTMSSTGYS) are compositionally biased toward polar residues. Phosphoserine occurs at positions 597, 683, 708, and 719. Positions 715–867 (WSSESIKKPM…PYVEEPDGVA (153 aa)) constitute a MyTH4 domain. Residues 914–1102 (SALQEVMSMQ…VLIQHLDTSF (189 aa)) enclose the Rho-GAP domain.

The protein resides in the nucleus. The protein is Rho GTPase-activating protein 39 (Arhgap39) of Mus musculus (Mouse).